Consider the following 288-residue polypeptide: ATP synthase gamma chain (288 aa).

Belongs to the ATPase gamma chain family. F-type ATPases have 2 components, CF(1) - the catalytic core - and CF(0) - the membrane proton channel. CF(1) has five subunits: alpha(3), beta(3), gamma(1), delta(1), epsilon(1). CF(0) has three main subunits: a, b and c.

Its subcellular location is the cell membrane. Produces ATP from ADP in the presence of a proton gradient across the membrane. The gamma chain is believed to be important in regulating ATPase activity and the flow of protons through the CF(0) complex. The chain is ATP synthase gamma chain from Bacillus pumilus (strain SAFR-032).